The following is a 273-amino-acid chain: Formamidopyrimidine-DNA glycosylase (273 aa).

The active-site Schiff-base intermediate with DNA is the Pro-2. The active-site Proton donor is Glu-3. The active-site Proton donor; for beta-elimination activity is the Lys-58. 3 residues coordinate DNA: His-91, Arg-110, and Arg-153. The FPG-type zinc-finger motif lies at 238 to 272 (KVYGKEGQPCPRCGEDFVKIKISGRGTTYCLHCQK). Arg-262 functions as the Proton donor; for delta-elimination activity in the catalytic mechanism.

It belongs to the FPG family. In terms of assembly, monomer. Zn(2+) is required as a cofactor.

It carries out the reaction Hydrolysis of DNA containing ring-opened 7-methylguanine residues, releasing 2,6-diamino-4-hydroxy-5-(N-methyl)formamidopyrimidine.. It catalyses the reaction 2'-deoxyribonucleotide-(2'-deoxyribose 5'-phosphate)-2'-deoxyribonucleotide-DNA = a 3'-end 2'-deoxyribonucleotide-(2,3-dehydro-2,3-deoxyribose 5'-phosphate)-DNA + a 5'-end 5'-phospho-2'-deoxyribonucleoside-DNA + H(+). Functionally, involved in base excision repair of DNA damaged by oxidation or by mutagenic agents. Acts as a DNA glycosylase that recognizes and removes damaged bases. Has a preference for oxidized purines, such as 7,8-dihydro-8-oxoguanine (8-oxoG). Has AP (apurinic/apyrimidinic) lyase activity and introduces nicks in the DNA strand. Cleaves the DNA backbone by beta-delta elimination to generate a single-strand break at the site of the removed base with both 3'- and 5'-phosphates. In Lactobacillus delbrueckii subsp. bulgaricus (strain ATCC 11842 / DSM 20081 / BCRC 10696 / JCM 1002 / NBRC 13953 / NCIMB 11778 / NCTC 12712 / WDCM 00102 / Lb 14), this protein is Formamidopyrimidine-DNA glycosylase.